A 247-amino-acid polypeptide reads, in one-letter code: Geranylgeranylglyceryl phosphate synthase (247 aa).

Mg(2+)-binding residues include Asp-23 and Ser-52. Sn-glycerol 1-phosphate is bound by residues 171–177 (YLEAGSG), 203–204 (GG), and 225–226 (GT).

Belongs to the GGGP/HepGP synthase family. Group II subfamily. Requires Mg(2+) as cofactor.

The protein resides in the cytoplasm. It carries out the reaction sn-glycerol 1-phosphate + (2E,6E,10E)-geranylgeranyl diphosphate = sn-3-O-(geranylgeranyl)glycerol 1-phosphate + diphosphate. Its pathway is membrane lipid metabolism; glycerophospholipid metabolism. Its function is as follows. Prenyltransferase that catalyzes the transfer of the geranylgeranyl moiety of geranylgeranyl diphosphate (GGPP) to the C3 hydroxyl of sn-glycerol-1-phosphate (G1P). This reaction is the first ether-bond-formation step in the biosynthesis of archaeal membrane lipids. The chain is Geranylgeranylglyceryl phosphate synthase from Methanosarcina mazei (strain ATCC BAA-159 / DSM 3647 / Goe1 / Go1 / JCM 11833 / OCM 88) (Methanosarcina frisia).